The primary structure comprises 107 residues: EIVLTQSPAITAASLGQKVTITCSASSSVSYMHWYQQKSGTSPKPWIYEISKLASGVPARFSGSGSGTSYSLTISSMEAEDAAIYYCQQWNYPLITFGSGTKLEIKR.

The framework-1 stretch occupies residues 1–23 (EIVLTQSPAITAASLGQKVTITC). Cysteines 23 and 87 form a disulfide. The tract at residues 24–33 (SASSSVSYMH) is complementarity-determining-1. The segment at 34–48 (WYQQKSGTSPKPWIY) is framework-2. The interval 49-55 (EISKLAS) is complementarity-determining-2. Residues 56-87 (GVPARFSGSGSGTSYSLTISSMEAEDAAIYYC) form a framework-3 region. The tract at residues 88–96 (QQWNYPLIT) is complementarity-determining-3. Residues 97 to 106 (FGSGTKLEIK) are framework-4.

The polypeptide is Ig kappa chain V-VI region XRPC 24 (Mus musculus (Mouse)).